We begin with the raw amino-acid sequence, 108 residues long: uncharacterized protein (108 aa).

A run of 2 helical transmembrane segments spans residues 5 to 27 (TVYG…QLEI) and 83 to 105 (IFLM…LNIF).

Its subcellular location is the membrane. This is an uncharacterized protein from Schizosaccharomyces pombe (strain 972 / ATCC 24843) (Fission yeast).